A 539-amino-acid chain; its full sequence is Chaperonin GroEL 1 (539 aa).

Residues 30 to 33, K51, 87 to 91, G415, 480 to 482, and D496 each bind ATP; these read TLGP, DGTTT, and NAA.

Belongs to the chaperonin (HSP60) family. As to quaternary structure, forms a cylinder of 14 subunits composed of two heptameric rings stacked back-to-back. Interacts with the co-chaperonin GroES.

It is found in the cytoplasm. It catalyses the reaction ATP + H2O + a folded polypeptide = ADP + phosphate + an unfolded polypeptide.. Together with its co-chaperonin GroES, plays an essential role in assisting protein folding. The GroEL-GroES system forms a nano-cage that allows encapsulation of the non-native substrate proteins and provides a physical environment optimized to promote and accelerate protein folding. In Erythrobacter litoralis (strain HTCC2594), this protein is Chaperonin GroEL 1.